A 1027-amino-acid chain; its full sequence is C2 and GRAM domain-containing protein At5g50170 (1027 aa).

The C2 1 domain occupies methionine 1 to phenylalanine 103. The segment covering serine 158–aspartate 167 has biased composition (basic and acidic residues). Disordered regions lie at residues serine 158–lysine 177 and leucine 201–serine 223. Residues glycine 168 to lysine 177 show a composition bias toward basic residues. Residues serine 206 to serine 223 are compositionally biased toward polar residues. The VASt 1 domain occupies threonine 253–aspartate 426. Residues phenylalanine 452–valine 472 traverse the membrane as a helical segment. In terms of domain architecture, C2 2 spans threonine 516 to valine 639. A GRAM domain is found at alanine 693–valine 756. In terms of domain architecture, VASt 2 spans methionine 855 to serine 1018.

The protein localises to the membrane. This Arabidopsis thaliana (Mouse-ear cress) protein is C2 and GRAM domain-containing protein At5g50170.